A 409-amino-acid polypeptide reads, in one-letter code: Nitrogen permease regulator 2 homolog (409 aa).

The protein belongs to the NPR2 family.

It localises to the cytoplasm. The protein localises to the nucleus. Functionally, mediates inactivation of the TORC1 complex in response to amino acid starvation. Post-transcriptional regulator of nitrogen permeases. The polypeptide is Nitrogen permease regulator 2 homolog (Schizosaccharomyces pombe (strain 972 / ATCC 24843) (Fission yeast)).